The sequence spans 334 residues: tRNA uridine(34) hydroxylase (334 aa).

The Rhodanese domain occupies 123–217 (SDPDVILVDT…YLEEVKAEES (95 aa)). The active-site Cysteine persulfide intermediate is the C177.

This sequence belongs to the TrhO family.

The enzyme catalyses uridine(34) in tRNA + AH2 + O2 = 5-hydroxyuridine(34) in tRNA + A + H2O. Its function is as follows. Catalyzes oxygen-dependent 5-hydroxyuridine (ho5U) modification at position 34 in tRNAs. This chain is tRNA uridine(34) hydroxylase, found in Shewanella baltica (strain OS223).